The primary structure comprises 144 residues: Large ribosomal subunit protein uL15 (144 aa).

A disordered region spans residues Met-1–Gly-52. The segment covering Arg-21–Gly-31 has biased composition (gly residues). Residues Gly-32–Gly-44 are compositionally biased toward basic residues.

Belongs to the universal ribosomal protein uL15 family. In terms of assembly, part of the 50S ribosomal subunit.

Functionally, binds to the 23S rRNA. The sequence is that of Large ribosomal subunit protein uL15 from Aliivibrio fischeri (strain ATCC 700601 / ES114) (Vibrio fischeri).